The sequence spans 485 residues: MEYKLLVGLEVHVQLGLKTKAFCGCKNDFGGIPNSRTCPTCLGLPGALPSINKELISSAILAGHATNSKIKNIIKFDRKHYAYPDLPKGYQISQNDAPICENGFIFIETCSGLKKINIIRIHMEEDSGKSLHLLESENRSYIDFNRSGAPLLEIVSNPDINNGEEAVAYLSALREIFRYLDLSDCNMENGSFRCDVNVNLLINENGVEYKTPISEIKNLNSFKSVKLAIDYEKSRQKEEWILHRRTFESVGKHTMGFDDKKGITVLQRSKETVADYRYIKDPDLPLIKLDDSYIESIKSNRMVELPFDTRVRLKEQYGLSDFDVVTLTADKNLVKYFEEAAIASSDPKRVANWILSEVLSVLNDREMNILDFNLPPSYISELVEFIVNDRVSGKIAKEIFLEMLERNVSSAIIINEKNLAQISDISFIESVVFEVLNENPKSIELYKKGKSHAIKFMMGQIMRKTSGRVNPVLANEILMNKLRDV.

Belongs to the GatB/GatE family. GatB subfamily. In terms of assembly, heterotrimer of A, B and C subunits.

It carries out the reaction L-glutamyl-tRNA(Gln) + L-glutamine + ATP + H2O = L-glutaminyl-tRNA(Gln) + L-glutamate + ADP + phosphate + H(+). The catalysed reaction is L-aspartyl-tRNA(Asn) + L-glutamine + ATP + H2O = L-asparaginyl-tRNA(Asn) + L-glutamate + ADP + phosphate + 2 H(+). Its function is as follows. Allows the formation of correctly charged Asn-tRNA(Asn) or Gln-tRNA(Gln) through the transamidation of misacylated Asp-tRNA(Asn) or Glu-tRNA(Gln) in organisms which lack either or both of asparaginyl-tRNA or glutaminyl-tRNA synthetases. The reaction takes place in the presence of glutamine and ATP through an activated phospho-Asp-tRNA(Asn) or phospho-Glu-tRNA(Gln). The protein is Aspartyl/glutamyl-tRNA(Asn/Gln) amidotransferase subunit B of Borrelia turicatae (strain 91E135).